A 347-amino-acid polypeptide reads, in one-letter code: Protein RecA (347 aa).

An ATP-binding site is contributed by 65 to 72 (GPESSGKT). Residues 327–336 (KFEPTELSRE) are compositionally biased toward basic and acidic residues. Residues 327–347 (KFEPTELSREEGDEDTLEDAM) form a disordered region. Positions 337–347 (EGDEDTLEDAM) are enriched in acidic residues.

Belongs to the RecA family.

Its subcellular location is the cytoplasm. Its function is as follows. Can catalyze the hydrolysis of ATP in the presence of single-stranded DNA, the ATP-dependent uptake of single-stranded DNA by duplex DNA, and the ATP-dependent hybridization of homologous single-stranded DNAs. It interacts with LexA causing its activation and leading to its autocatalytic cleavage. This chain is Protein RecA, found in Xylella fastidiosa (strain M23).